Here is a 397-residue protein sequence, read N- to C-terminus: Succinyl-diaminopimelate desuccinylase (397 aa).

A Zn(2+)-binding site is contributed by histidine 74. Aspartate 76 is a catalytic residue. Aspartate 107 provides a ligand contact to Zn(2+). Glutamate 141 serves as the catalytic Proton acceptor. Glutamate 142, glutamate 170, and histidine 368 together coordinate Zn(2+).

It belongs to the peptidase M20A family. DapE subfamily. In terms of assembly, homodimer. Requires Zn(2+) as cofactor. The cofactor is Co(2+).

It carries out the reaction N-succinyl-(2S,6S)-2,6-diaminopimelate + H2O = (2S,6S)-2,6-diaminopimelate + succinate. The protein operates within amino-acid biosynthesis; L-lysine biosynthesis via DAP pathway; LL-2,6-diaminopimelate from (S)-tetrahydrodipicolinate (succinylase route): step 3/3. In terms of biological role, catalyzes the hydrolysis of N-succinyl-L,L-diaminopimelic acid (SDAP), forming succinate and LL-2,6-diaminopimelate (DAP), an intermediate involved in the bacterial biosynthesis of lysine and meso-diaminopimelic acid, an essential component of bacterial cell walls. This is Succinyl-diaminopimelate desuccinylase from Mesorhizobium japonicum (strain LMG 29417 / CECT 9101 / MAFF 303099) (Mesorhizobium loti (strain MAFF 303099)).